A 338-amino-acid polypeptide reads, in one-letter code: Cell division protein ZipA (338 aa).

Topologically, residues 1 to 2 (MS) are periplasmic. Residues 3–23 (LREWLIAIGTLVIIGIVIDGV) form a helical membrane-spanning segment. Residues 24 to 338 (RRMRRARKES…FERKQRSQRA (315 aa)) lie on the Cytoplasmic side of the membrane. The disordered stretch occupies residues 33-192 (SMAISSGMGA…RKNQPLAGAN (160 aa)). 2 stretches are compositionally biased toward basic and acidic residues: residues 70–81 (TLEDRGYLKRDM) and 138–162 (EVDRSKTRPSVPEKAKAEPEPRAEE).

It belongs to the ZipA family. In terms of assembly, interacts with FtsZ via their C-terminal domains.

The protein resides in the cell inner membrane. In terms of biological role, essential cell division protein that stabilizes the FtsZ protofilaments by cross-linking them and that serves as a cytoplasmic membrane anchor for the Z ring. Also required for the recruitment to the septal ring of downstream cell division proteins. This Marinobacter nauticus (strain ATCC 700491 / DSM 11845 / VT8) (Marinobacter aquaeolei) protein is Cell division protein ZipA.